Consider the following 689-residue polypeptide: Glycine--tRNA ligase beta subunit (689 aa).

The protein belongs to the class-II aminoacyl-tRNA synthetase family. As to quaternary structure, tetramer of two alpha and two beta subunits.

The protein localises to the cytoplasm. It carries out the reaction tRNA(Gly) + glycine + ATP = glycyl-tRNA(Gly) + AMP + diphosphate. The polypeptide is Glycine--tRNA ligase beta subunit (Actinobacillus pleuropneumoniae serotype 3 (strain JL03)).